A 345-amino-acid chain; its full sequence is Phosphoribosylformylglycinamidine cyclo-ligase (345 aa).

Belongs to the AIR synthase family.

It is found in the cytoplasm. It carries out the reaction 2-formamido-N(1)-(5-O-phospho-beta-D-ribosyl)acetamidine + ATP = 5-amino-1-(5-phospho-beta-D-ribosyl)imidazole + ADP + phosphate + H(+). Its pathway is purine metabolism; IMP biosynthesis via de novo pathway; 5-amino-1-(5-phospho-D-ribosyl)imidazole from N(2)-formyl-N(1)-(5-phospho-D-ribosyl)glycinamide: step 2/2. This chain is Phosphoribosylformylglycinamidine cyclo-ligase, found in Salmonella choleraesuis (strain SC-B67).